The chain runs to 399 residues: Elongation factor Tu (399 aa).

The tr-type G domain maps to 10-208 (KPHVNIGTIG…TVDSYIPEPE (199 aa)). The interval 19–26 (GHVDHGKT) is G1. A GTP-binding site is contributed by 19 to 26 (GHVDHGKT). Position 26 (Thr-26) interacts with Mg(2+). Residues 64 to 68 (GITIN) are G2. A G3 region spans residues 85–88 (DAPG). GTP contacts are provided by residues 85–89 (DAPGH) and 140–143 (NKVD). The tract at residues 140–143 (NKVD) is G4. The tract at residues 178 to 180 (SAL) is G5.

Belongs to the TRAFAC class translation factor GTPase superfamily. Classic translation factor GTPase family. EF-Tu/EF-1A subfamily. As to quaternary structure, monomer.

It localises to the cytoplasm. The catalysed reaction is GTP + H2O = GDP + phosphate + H(+). In terms of biological role, GTP hydrolase that promotes the GTP-dependent binding of aminoacyl-tRNA to the A-site of ribosomes during protein biosynthesis. This is Elongation factor Tu from Streptococcus pyogenes serotype M12 (strain MGAS2096).